The chain runs to 328 residues: Fructose-1,6-bisphosphatase class 1 (328 aa).

Mg(2+) contacts are provided by Glu-91, Asp-110, Leu-112, and Asp-113. Substrate-binding positions include 113–116 (DGSS), Asn-205, and 257–259 (YLY). Glu-277 lines the Mg(2+) pocket.

It belongs to the FBPase class 1 family. As to quaternary structure, homotetramer. Mg(2+) serves as cofactor.

The protein localises to the cytoplasm. The enzyme catalyses beta-D-fructose 1,6-bisphosphate + H2O = beta-D-fructose 6-phosphate + phosphate. The protein operates within carbohydrate biosynthesis; gluconeogenesis. This Azorhizobium caulinodans (strain ATCC 43989 / DSM 5975 / JCM 20966 / LMG 6465 / NBRC 14845 / NCIMB 13405 / ORS 571) protein is Fructose-1,6-bisphosphatase class 1.